The following is a 298-amino-acid chain: Glutamyl-Q tRNA(Asp) synthetase (298 aa).

L-glutamate is bound by residues Arg12 to Thr16 and Glu48. The 'HIGH' region signature appears at Pro15–Ser25. Zn(2+)-binding residues include Cys104, Cys106, Tyr118, and Cys122. Tyr175 and Arg193 together coordinate L-glutamate. A 'KMSKS' region motif is present at residues Lys231 to Ser235. Lys234 contacts ATP.

This sequence belongs to the class-I aminoacyl-tRNA synthetase family. GluQ subfamily. Zn(2+) is required as a cofactor.

Functionally, catalyzes the tRNA-independent activation of glutamate in presence of ATP and the subsequent transfer of glutamate onto a tRNA(Asp). Glutamate is transferred on the 2-amino-5-(4,5-dihydroxy-2-cyclopenten-1-yl) moiety of the queuosine in the wobble position of the QUC anticodon. The sequence is that of Glutamyl-Q tRNA(Asp) synthetase from Pseudomonas fluorescens (strain ATCC BAA-477 / NRRL B-23932 / Pf-5).